The following is a 377-amino-acid chain: Spermidine/putrescine import ATP-binding protein PotA (377 aa).

In terms of domain architecture, ABC transporter spans 18 to 248; that stretch reads IRLSGISKSF…PKNLFVARFI (231 aa). 50–57 serves as a coordination point for ATP; the sequence is GPSGCGKT.

This sequence belongs to the ABC transporter superfamily. Spermidine/putrescine importer (TC 3.A.1.11.1) family. As to quaternary structure, the complex is composed of two ATP-binding proteins (PotA), two transmembrane proteins (PotB and PotC) and a solute-binding protein (PotD).

Its subcellular location is the cell inner membrane. The catalysed reaction is ATP + H2O + polyamine-[polyamine-binding protein]Side 1 = ADP + phosphate + polyamineSide 2 + [polyamine-binding protein]Side 1.. Functionally, part of the ABC transporter complex PotABCD involved in spermidine/putrescine import. Responsible for energy coupling to the transport system. The chain is Spermidine/putrescine import ATP-binding protein PotA from Vibrio vulnificus (strain CMCP6).